Here is a 220-residue protein sequence, read N- to C-terminus: Transmembrane emp24 domain-containing protein 1 (220 aa).

The signal sequence occupies residues Met-1–Ala-19. Topologically, residues Val-20–Asn-187 are extracellular. The GOLD domain maps to Gln-36–Phe-118. The stretch at Glu-138–Met-164 forms a coiled coil. The chain crosses the membrane as a helical span at residues Phe-188–Leu-208. The Cytoplasmic segment spans residues Lys-209–Thr-220. The short motif at Leu-211–Phe-212 is the COPII vesicle coat-binding element. A COPI vesicle coat-binding motif is present at residues Leu-211–Thr-220.

This sequence belongs to the EMP24/GP25L family. In terms of assembly, homodimer in endoplasmic reticulum, endoplasmic reticulum-Golgi intermediate compartment and cis-Golgi network. Interacts with IL1RL1. Interacts with RNF26; this interaction is important to modulate innate immune signaling through the cGAS-STING pathway.

The protein resides in the cell membrane. It localises to the endoplasmic reticulum membrane. The protein localises to the golgi apparatus. Its subcellular location is the cis-Golgi network membrane. It is found in the endoplasmic reticulum-Golgi intermediate compartment membrane. Its function is as follows. Potential role in vesicular protein trafficking, mainly in the early secretory pathway. May act as a cargo receptor at the lumenal side for incorporation of secretory cargo molecules into transport vesicles and may be involved in vesicle coat formation at the cytoplasmic side. Plays a positive role in IL-33-mediated IL-8 and IL-6 production by interacting with interleukin-33 receptor IL1RL1. Plays also a role in the modulation of innate immune signaling through the cGAS-STING pathway by interacting with RNF26. This Xenopus tropicalis (Western clawed frog) protein is Transmembrane emp24 domain-containing protein 1 (tmed1).